The chain runs to 176 residues: Nascent polypeptide-associated complex subunit alpha (176 aa).

The 65-residue stretch at 14 to 78 folds into the NAC-A/B domain; the sequence is SKNEKKAREL…AKVDDFTQRL (65 aa). Residues 85–127 are disordered; sequence LQQNEGVLPAGQDAVSKDPQSIQADMQAAADSATDKPSADDAV. Residues 137–176 form the UBA domain; that stretch reads LNADDIELVMQQAGVPRAKAAKALKEHDSDIVNAIMALSG.

This sequence belongs to the NAC-alpha family. As to quaternary structure, part of the nascent polypeptide-associated complex (NAC), consisting of EGD2 and EGD1. NAC associates with ribosomes via EGD1.

The protein localises to the cytoplasm. It localises to the nucleus. Its function is as follows. Component of the nascent polypeptide-associated complex (NAC), a dynamic component of the ribosomal exit tunnel, protecting the emerging polypeptides from interaction with other cytoplasmic proteins to ensure appropriate nascent protein targeting. The NAC complex also promotes mitochondrial protein import by enhancing productive ribosome interactions with the outer mitochondrial membrane and blocks the inappropriate interaction of ribosomes translating non-secretory nascent polypeptides with translocation sites in the membrane of the endoplasmic reticulum. EGD2 may also be involved in transcription regulation. This is Nascent polypeptide-associated complex subunit alpha (EGD2) from Kluyveromyces lactis (strain ATCC 8585 / CBS 2359 / DSM 70799 / NBRC 1267 / NRRL Y-1140 / WM37) (Yeast).